The chain runs to 725 residues: Kinesin-like protein KIF2C (725 aa).

Residue Ala-2 is modified to N-acetylalanine. The segment at 2–254 is globular; that stretch reads AMDSSLQARL…CHPLTMTDPI (253 aa). Residues Ser-6 and Ser-22 each carry the phosphoserine modification. Positions 89–116 are disordered; sequence QKQKRRSVNSKIPAPKESLRSRSTRMST. Ser-95 carries the phosphoserine; by AURKB modification. Residues 98–101 carry the Microtubule tip localization signal motif; sequence SKIP. Phosphoserine occurs at positions 106, 109, 111, 115, 166, 175, 187, and 192. Residues 207–238 form a negative regulator of microtubule-binding region; that stretch reads EKKAQNSEMRMKRAQEYDSSFPNWEFARMIKE. In terms of domain architecture, Kinesin motor spans 258–588; sequence RICVCVRKRP…LRYADRVKEL (331 aa). Residues Arg-264 and 348-355 contribute to the ATP site; that span reads GQTGSGKT. The short motif at 415–418 is the Nuclear localization signal element; sequence KKAK. Phosphoserine is present on residues Ser-519, Ser-621, and Ser-633. Residues 618–658 adopt a coiled-coil conformation; sequence GNLSKEEEELSSQMSSFNEAMTQIRELEEKAMEELKEIIQQ.

The protein belongs to the TRAFAC class myosin-kinesin ATPase superfamily. Kinesin family. MCAK/KIF2 subfamily. In terms of assembly, interacts with CENPH. Interacts with MTUS2/TIP150; the interaction is direct. Interacts with MAPRE1; the interaction is direct, regulated by phosphorylation and is probably required for targeting to growing microtubule plus ends. Interacts with KIF18B at microtubule tips; this interaction increases the affinity of both partners for microtubule plus ends and is required for robust microtubule depolymerization. Phosphorylation by AURKA or AURKB strongly reduces KIF18B-binding. Post-translationally, phosphorylation by AURKB, regulates association with centromeres and kinetochores and the microtubule depolymerization activity. Ubiquitinated. Expressed at high levels in thymus and testis, at low levels in small intestine, the mucosal lining of colon, and placenta, and at very low levels in spleen and ovary; expression is not detected in prostate, peripheral blood Leukocytes, heart, brain, lung, liver, skeletal muscle, kidney or pancreas. Isoform 2 is testis-specific.

It is found in the cytoplasm. The protein localises to the cytoskeleton. Its subcellular location is the nucleus. It localises to the chromosome. The protein resides in the centromere. It is found in the kinetochore. Functionally, in complex with KIF18B, constitutes the major microtubule plus-end depolymerizing activity in mitotic cells. Regulates the turnover of microtubules at the kinetochore and functions in chromosome segregation during mitosis. Plays a role in chromosome congression and is required for the lateral to end-on conversion of the chromosome-microtubule attachment. The sequence is that of Kinesin-like protein KIF2C (KIF2C) from Homo sapiens (Human).